We begin with the raw amino-acid sequence, 693 residues long: Auxin response factor 10 (693 aa).

The TF-B3 DNA-binding region spans 115 to 217; that stretch reads FAKTLTQSDA…DLCVGIRRAK (103 aa). The PB1 domain maps to 580-668; that stretch reads TGHCKVFMES…DIGGDNVRKT (89 aa).

This sequence belongs to the ARF family. In terms of assembly, homodimers and heterodimers. Expressed in the whole plant.

It localises to the nucleus. Functionally, auxin response factors (ARFs) are transcriptional factors that bind specifically to the DNA sequence 5'-TGTCTC-3' found in the auxin-responsive promoter elements (AuxREs). Could act as transcriptional activator or repressor. Formation of heterodimers with Aux/IAA proteins may alter their ability to modulate early auxin response genes expression. This Arabidopsis thaliana (Mouse-ear cress) protein is Auxin response factor 10 (ARF10).